A 100-amino-acid chain; its full sequence is Apolipoprotein C-II (100 aa).

Residues 1 to 22 (MGSRFLLALFLVLLVLGCEVQA) form the signal peptide. The interval 66–74 (SVDEKLRDM) is lipid binding. The interval 78-100 (SSAAMTTYASIFTDQILTLLKGE) is lipoprotein lipase cofactor.

It belongs to the apolipoprotein C2 family. In terms of processing, proapolipoprotein C-II is synthesized as a sialic acid containing glycoprotein which is subsequently desialylated prior to its proteolytic processing. Proapolipoprotein C-II, the major form found in plasma undergoes proteolytic cleavage of its N-terminal hexapeptide to generate the mature form apolipoprotein C-II, which occurs as the minor form in plasma.

The protein localises to the secreted. Its function is as follows. Component of chylomicrons, very low-density lipoproteins (VLDL), low-density lipoproteins (LDL), and high-density lipoproteins (HDL) in plasma. Plays an important role in lipoprotein metabolism as an activator of lipoprotein lipase. The chain is Apolipoprotein C-II (APOC2) from Ellobius talpinus (Northern mole vole).